A 309-amino-acid polypeptide reads, in one-letter code: Aurora kinase C (309 aa).

The tract at residues 1–33 is disordered; that stretch reads MSSPRAVVQLGKAQPAGEELATANQTAQQPSSP. A compositionally biased stretch (polar residues) spans 22-32; that stretch reads TANQTAQQPSS. Positions 43 to 293 constitute a Protein kinase domain; the sequence is FEIGRPLGKG…LAQILKHPWV (251 aa). ATP-binding positions include 49–57 and Lys-72; that span reads LGKGKFGNV. Asp-166 (proton acceptor) is an active-site residue. Thr-198 is modified (phosphothreonine; by PKA). Positions 292 to 309 are interaction with BIRC5; it reads WVQAHSRRVLPPCAQMAS.

Belongs to the protein kinase superfamily. Ser/Thr protein kinase family. Aurora subfamily. As to quaternary structure, component of the chromosomal passenger complex (CPC) composed of at least BIRC5/survivin, CDCA8/borealin, INCENP, AURKB or AURKC; predominantly independent AURKB- and AURKC-containing complexes exist; in the complex interacts directly with BIRC5/survivin and INCENP. Interacts with TACC1. As to expression, isoform 1 and isoform 2 are expressed in testis. Elevated expression levels were seen only in a subset of cancer cell lines such as Hep-G2, Huh-7 and HeLa. Expression is maximum at M phase.

It is found in the nucleus. It localises to the chromosome. Its subcellular location is the centromere. The protein resides in the cytoplasm. The protein localises to the cytoskeleton. It is found in the spindle. It carries out the reaction L-seryl-[protein] + ATP = O-phospho-L-seryl-[protein] + ADP + H(+). The enzyme catalyses L-threonyl-[protein] + ATP = O-phospho-L-threonyl-[protein] + ADP + H(+). With respect to regulation, okadaic acid, an inhibitor of protein phosphatase 1 (PP1), protein phosphatase 2A (PP2A) and protein phosphatase 5 (PP5), increases AURKC activity. AURKC is also stabilized through its interaction with INCENP, which also acts as an activator. Functionally, serine/threonine-protein kinase component of the chromosomal passenger complex (CPC), a complex that acts as a key regulator of mitosis. The CPC complex has essential functions at the centromere in ensuring correct chromosome alignment and segregation and is required for chromatin-induced microtubule stabilization and spindle assembly. Also plays a role in meiosis and more particularly in spermatogenesis. Has redundant cellular functions with AURKB and can rescue an AURKB knockdown. Like AURKB, AURKC phosphorylates histone H3 at 'Ser-10' and 'Ser-28'. AURKC phosphorylates the CPC complex subunits BIRC5/survivin and INCENP leading to increased AURKC activity. Phosphorylates TACC1, another protein involved in cell division, at 'Ser-228'. The protein is Aurora kinase C (AURKC) of Homo sapiens (Human).